Reading from the N-terminus, the 157-residue chain is Biotin carboxyl carrier protein of acetyl-CoA carboxylase (157 aa).

A Biotinyl-binding domain is found at 80–156 (YATIVSPMVG…DCGQALMKVE (77 aa)). The residue at position 122 (Lys-122) is an N6-biotinyllysine.

Its subcellular location is the plastid. It is found in the chloroplast. Its pathway is lipid metabolism; fatty acid biosynthesis. In terms of biological role, this protein is a component of the acetyl coenzyme A carboxylase complex; first, biotin carboxylase catalyzes the carboxylation of the carrier protein and then the transcarboxylase transfers the carboxyl group to form malonyl-CoA. In Porphyra purpurea (Red seaweed), this protein is Biotin carboxyl carrier protein of acetyl-CoA carboxylase (accB).